The following is a 256-amino-acid chain: DNA repair protein RecO (256 aa).

This sequence belongs to the RecO family.

Functionally, involved in DNA repair and RecF pathway recombination. The polypeptide is DNA repair protein RecO (Rhizobium leguminosarum bv. trifolii (strain WSM2304)).